The chain runs to 127 residues: Small ribosomal subunit protein uS11 (127 aa).

This sequence belongs to the universal ribosomal protein uS11 family. Part of the 30S ribosomal subunit. Interacts with proteins S7 and S18. Binds to IF-3.

Functionally, located on the platform of the 30S subunit, it bridges several disparate RNA helices of the 16S rRNA. Forms part of the Shine-Dalgarno cleft in the 70S ribosome. This Rickettsia bellii (strain RML369-C) protein is Small ribosomal subunit protein uS11.